We begin with the raw amino-acid sequence, 122 residues long: Large ribosomal subunit protein uL14 (122 aa).

This sequence belongs to the universal ribosomal protein uL14 family. Part of the 50S ribosomal subunit. Forms a cluster with proteins L3 and L19. In the 70S ribosome, L14 and L19 interact and together make contacts with the 16S rRNA in bridges B5 and B8.

In terms of biological role, binds to 23S rRNA. Forms part of two intersubunit bridges in the 70S ribosome. This Corynebacterium kroppenstedtii (strain DSM 44385 / JCM 11950 / CIP 105744 / CCUG 35717) protein is Large ribosomal subunit protein uL14.